The primary structure comprises 444 residues: Platelet-activating factor acetylhydrolase (444 aa).

The first 21 residues, 1–21 (MLPSKLHALFCLCTCLALVYP), serve as a signal peptide directing secretion. Asparagine 60 and asparagine 200 each carry an N-linked (GlcNAc...) asparagine glycan. Serine 274 (nucleophile) is an active-site residue. Catalysis depends on charge relay system residues aspartate 297 and histidine 352. N-linked (GlcNAc...) asparagine glycans are attached at residues asparagine 424 and asparagine 434.

This sequence belongs to the AB hydrolase superfamily. Lipase family. N-glycosylated. Plasma.

The protein localises to the secreted. The protein resides in the extracellular space. It catalyses the reaction a 1-O-alkyl-2-acetyl-sn-glycero-3-phosphocholine + H2O = a 1-O-alkyl-sn-glycero-3-phosphocholine + acetate + H(+). The enzyme catalyses 1-O-decyl-2-acetyl-sn-glycero-3-phosphocholine + H2O = 1-O-decyl-sn-glycero-3-phosphocholine + acetate + H(+). The catalysed reaction is 1-O-dodecyl-2-acetyl-sn-glycero-3-phosphocholine + H2O = 1-O-dodecyl-sn-glycero-3-phosphocholine + acetate + H(+). It carries out the reaction 1-O-tetradecyl-2-acetyl-sn-glycero-3-phosphocholine + H2O = 1-O-tetradecyl-sn-glycero-3-phosphocholine + acetate + H(+). It catalyses the reaction 1-O-hexadecyl-2-acetyl-sn-glycero-3-phosphocholine + H2O = 1-O-hexadecyl-sn-glycero-3-phosphocholine + acetate + H(+). The enzyme catalyses 1-O-octadecyl-2-acetyl-sn-glycero-3-phosphocholine + H2O = 1-O-octadecyl-sn-glycero-3-phosphocholine + acetate + H(+). The catalysed reaction is 1-hexadecanoyl-2-acetyl-sn-glycero-3-phosphocholine + H2O = 1-hexadecanoyl-sn-glycero-3-phosphocholine + acetate + H(+). It carries out the reaction 1-hexadecanoyl-2-propionyl-sn-glycero-3-phosphocholine + H2O = propanoate + 1-hexadecanoyl-sn-glycero-3-phosphocholine + H(+). It catalyses the reaction 1-hexadecanoyl-2-butanoyl-sn-glycero-3-phosphocholine + H2O = butanoate + 1-hexadecanoyl-sn-glycero-3-phosphocholine + H(+). The enzyme catalyses 1-hexadecanoyl-2-pentanoyl-sn-glycero-3-phosphocholine + H2O = pentanoate + 1-hexadecanoyl-sn-glycero-3-phosphocholine + H(+). The catalysed reaction is 1-hexadecanoyl-2-glutaroyl-sn-glycero-3-phosphocholine + H2O = glutarate + 1-hexadecanoyl-sn-glycero-3-phosphocholine + H(+). It carries out the reaction 1-hexadecanoyl-2-(5-oxopentanoyl)-sn-glycero-3-phosphocholine + H2O = 5-oxopentanoate + 1-hexadecanoyl-sn-glycero-3-phosphocholine + H(+). It catalyses the reaction 1-hexadecanoyl-2-(9-oxononanoyl)-sn-glycero-3-phosphocholine + H2O = 9-oxononanoate + 1-hexadecanoyl-sn-glycero-3-phosphocholine + H(+). The enzyme catalyses 1-hexadecanoyl-2-[9-hydroperoxy-(10E-octadecenoyl)]-sn-glycero-3-phosphocholine + H2O = 9-hydroperoxy-10E-octadecenoate + 1-hexadecanoyl-sn-glycero-3-phosphocholine + H(+). The catalysed reaction is 1-hexadecanoyl-2-(10-hydroperoxy-8E-octadecenoyl)-sn-glycero-3-phosphocholine + H2O = 10-hydroperoxy-(8E)-octadecenoate + 1-hexadecanoyl-sn-glycero-3-phosphocholine + H(+). Its function is as follows. Lipoprotein-associated calcium-independent phospholipase A2 involved in phospholipid catabolism during inflammatory and oxidative stress response. At the lipid-aqueous interface, hydrolyzes the ester bond of fatty acyl group attached at sn-2 position of phospholipids (phospholipase A2 activity). Specifically targets phospholipids with a short-chain fatty acyl group at sn-2 position. Can hydrolyze phospholipids with long fatty acyl chains, only if they carry oxidized functional groups. Hydrolyzes and inactivates platelet-activating factor (PAF, 1-O-alkyl-2-acetyl-sn-glycero-3-phosphocholine), a potent pro-inflammatory signaling lipid that acts through PTAFR on various innate immune cells. Hydrolyzes oxidatively truncated phospholipids carrying an aldehyde group at omega position, preventing their accumulation in low-density lipoprotein (LDL) particles and uncontrolled pro-inflammatory effects. As part of high-density lipoprotein (HDL) particles, can hydrolyze phospholipids having long-chain fatty acyl hydroperoxides at sn-2 position and protect against potential accumulation of these oxylipins in the vascular wall. Catalyzes the release from membrane phospholipids of F2-isoprostanes, lipid biomarkers of cellular oxidative damage. This is Platelet-activating factor acetylhydrolase (PLA2G7) from Bos taurus (Bovine).